The following is a 210-amino-acid chain: Na(+)-translocating NADH-quinone reductase subunit D (210 aa).

6 helical membrane passes run 14–34, 42–62, 72–92, 103–123, 131–151, and 178–198; these read PIIS…ALAV, LVMT…ISMI, IIVQ…VLQA, VFVG…AYAM, FMDG…VGFV, and NGLL…IWII.

The protein belongs to the NqrDE/RnfAE family. Composed of six subunits; NqrA, NqrB, NqrC, NqrD, NqrE and NqrF.

It localises to the cell inner membrane. The catalysed reaction is a ubiquinone + n Na(+)(in) + NADH + H(+) = a ubiquinol + n Na(+)(out) + NAD(+). In terms of biological role, NQR complex catalyzes the reduction of ubiquinone-1 to ubiquinol by two successive reactions, coupled with the transport of Na(+) ions from the cytoplasm to the periplasm. NqrA to NqrE are probably involved in the second step, the conversion of ubisemiquinone to ubiquinol. The chain is Na(+)-translocating NADH-quinone reductase subunit D from Shewanella loihica (strain ATCC BAA-1088 / PV-4).